The primary structure comprises 381 residues: 3-hydroxyisobutyryl-CoA hydrolase, mitochondrial (381 aa).

A mitochondrion-targeting transit peptide spans methionine 1–valine 25. Residues glutamate 116, glycine 141, glutamate 164, and aspartate 172 each contribute to the substrate site.

It belongs to the enoyl-CoA hydratase/isomerase family.

It localises to the mitochondrion. The enzyme catalyses 3-hydroxy-2-methylpropanoyl-CoA + H2O = 3-hydroxy-2-methylpropanoate + CoA + H(+). It participates in amino-acid degradation; L-valine degradation. In terms of biological role, hydrolyzes 3-hydroxyisobutyryl-CoA (HIBYL-CoA), a saline catabolite. This chain is 3-hydroxyisobutyryl-CoA hydrolase, mitochondrial (hibch), found in Dictyostelium discoideum (Social amoeba).